Reading from the N-terminus, the 95-residue chain is Integration host factor subunit beta (95 aa).

It belongs to the bacterial histone-like protein family. As to quaternary structure, heterodimer of an alpha and a beta chain.

Its function is as follows. This protein is one of the two subunits of integration host factor, a specific DNA-binding protein that functions in genetic recombination as well as in transcriptional and translational control. The sequence is that of Integration host factor subunit beta from Shewanella loihica (strain ATCC BAA-1088 / PV-4).